A 204-amino-acid polypeptide reads, in one-letter code: MTIPIVIEQSGRGERAFDIYSRLLRERIIFLGQQVDSNLANLIVAQLLFLDAEDPEKDIYLYINSPGGSVTAGMGIFDTMKHIRPDVCTICTGLAASMGAFLLSAGTKGKRMSLPHSRIMIHQPLGGAQGQATDIEIQAREILYHKRRLNDYLAEHTGQPIERIAEDTERDFFMSPDEARDYGLIDQVIDRHAAGSRPVAMVNQ.

Ser-97 acts as the Nucleophile in catalysis. The active site involves His-122.

This sequence belongs to the peptidase S14 family. In terms of assembly, fourteen ClpP subunits assemble into 2 heptameric rings which stack back to back to give a disk-like structure with a central cavity, resembling the structure of eukaryotic proteasomes.

It localises to the cytoplasm. The catalysed reaction is Hydrolysis of proteins to small peptides in the presence of ATP and magnesium. alpha-casein is the usual test substrate. In the absence of ATP, only oligopeptides shorter than five residues are hydrolyzed (such as succinyl-Leu-Tyr-|-NHMec, and Leu-Tyr-Leu-|-Tyr-Trp, in which cleavage of the -Tyr-|-Leu- and -Tyr-|-Trp bonds also occurs).. Functionally, cleaves peptides in various proteins in a process that requires ATP hydrolysis. Has a chymotrypsin-like activity. Plays a major role in the degradation of misfolded proteins. In Trichormus variabilis (strain ATCC 29413 / PCC 7937) (Anabaena variabilis), this protein is ATP-dependent Clp protease proteolytic subunit 1.